A 198-amino-acid chain; its full sequence is Peptidyl-tRNA hydrolase (198 aa).

Tyr-15 lines the tRNA pocket. Residue His-20 is the Proton acceptor of the active site. Residues Phe-66, Asn-68, and Asn-114 each coordinate tRNA.

The protein belongs to the PTH family. In terms of assembly, monomer.

Its subcellular location is the cytoplasm. The enzyme catalyses an N-acyl-L-alpha-aminoacyl-tRNA + H2O = an N-acyl-L-amino acid + a tRNA + H(+). Its function is as follows. Hydrolyzes ribosome-free peptidyl-tRNAs (with 1 or more amino acids incorporated), which drop off the ribosome during protein synthesis, or as a result of ribosome stalling. In terms of biological role, catalyzes the release of premature peptidyl moieties from peptidyl-tRNA molecules trapped in stalled 50S ribosomal subunits, and thus maintains levels of free tRNAs and 50S ribosomes. This is Peptidyl-tRNA hydrolase from Cupriavidus metallidurans (strain ATCC 43123 / DSM 2839 / NBRC 102507 / CH34) (Ralstonia metallidurans).